Here is a 397-residue protein sequence, read N- to C-terminus: Protein-glutamate methylesterase/protein-glutamine glutaminase of group 2 operon (397 aa).

The Response regulatory domain maps to Arg-21 to His-139. Asp-72 is modified (4-aspartylphosphate). The region spanning Pro-199–Val-388 is the CheB-type methylesterase domain. Residues Ser-213, His-241, and Asp-337 contribute to the active site.

This sequence belongs to the CheB family. In terms of processing, phosphorylated by CheA. Phosphorylation of the N-terminal regulatory domain activates the methylesterase activity.

It localises to the cytoplasm. The catalysed reaction is [protein]-L-glutamate 5-O-methyl ester + H2O = L-glutamyl-[protein] + methanol + H(+). The enzyme catalyses L-glutaminyl-[protein] + H2O = L-glutamyl-[protein] + NH4(+). Its function is as follows. Involved in chemotaxis. Part of a chemotaxis signal transduction system that modulates chemotaxis in response to various stimuli. Catalyzes the demethylation of specific methylglutamate residues introduced into the chemoreceptors (methyl-accepting chemotaxis proteins or MCP) by CheR. Also mediates the irreversible deamidation of specific glutamine residues to glutamic acid. In Bradyrhizobium diazoefficiens (strain JCM 10833 / BCRC 13528 / IAM 13628 / NBRC 14792 / USDA 110), this protein is Protein-glutamate methylesterase/protein-glutamine glutaminase of group 2 operon.